The following is a 559-amino-acid chain: Dihydroxy-acid dehydratase (559 aa).

A [2Fe-2S] cluster-binding site is contributed by Cys-52. Asp-84 is a binding site for Mg(2+). Cys-125 lines the [2Fe-2S] cluster pocket. Asp-126 and Lys-127 together coordinate Mg(2+). The residue at position 127 (Lys-127) is an N6-carboxylysine. [2Fe-2S] cluster is bound at residue Cys-197. Glu-447 contributes to the Mg(2+) binding site. The active-site Proton acceptor is Ser-473.

Belongs to the IlvD/Edd family. In terms of assembly, homodimer. [2Fe-2S] cluster serves as cofactor. Requires Mg(2+) as cofactor.

It catalyses the reaction (2R)-2,3-dihydroxy-3-methylbutanoate = 3-methyl-2-oxobutanoate + H2O. The enzyme catalyses (2R,3R)-2,3-dihydroxy-3-methylpentanoate = (S)-3-methyl-2-oxopentanoate + H2O. Its pathway is amino-acid biosynthesis; L-isoleucine biosynthesis; L-isoleucine from 2-oxobutanoate: step 3/4. It functions in the pathway amino-acid biosynthesis; L-valine biosynthesis; L-valine from pyruvate: step 3/4. Functionally, functions in the biosynthesis of branched-chain amino acids. Catalyzes the dehydration of (2R,3R)-2,3-dihydroxy-3-methylpentanoate (2,3-dihydroxy-3-methylvalerate) into 2-oxo-3-methylpentanoate (2-oxo-3-methylvalerate) and of (2R)-2,3-dihydroxy-3-methylbutanoate (2,3-dihydroxyisovalerate) into 2-oxo-3-methylbutanoate (2-oxoisovalerate), the penultimate precursor to L-isoleucine and L-valine, respectively. This Roseiflexus castenholzii (strain DSM 13941 / HLO8) protein is Dihydroxy-acid dehydratase.